The following is a 279-amino-acid chain: Proline-rich protein 23D1 (279 aa).

Disordered regions lie at residues 1-60 (MYGY…PHLN) and 247-270 (LRPMPPSPSPGPQVYHRVHHRPPS). Over residues 15-33 (TEPQNDNEGETSLATTQMN) the composition is skewed to polar residues.

The protein belongs to the PRR23 family.

This is Proline-rich protein 23D1 (PRR23D1) from Homo sapiens (Human).